A 284-amino-acid chain; its full sequence is Bifunctional protein FolD (284 aa).

NADP(+) is bound by residues Gly164–Ser166 and Ser189.

Belongs to the tetrahydrofolate dehydrogenase/cyclohydrolase family. As to quaternary structure, homodimer.

It catalyses the reaction (6R)-5,10-methylene-5,6,7,8-tetrahydrofolate + NADP(+) = (6R)-5,10-methenyltetrahydrofolate + NADPH. The catalysed reaction is (6R)-5,10-methenyltetrahydrofolate + H2O = (6R)-10-formyltetrahydrofolate + H(+). Its pathway is one-carbon metabolism; tetrahydrofolate interconversion. In terms of biological role, catalyzes the oxidation of 5,10-methylenetetrahydrofolate to 5,10-methenyltetrahydrofolate and then the hydrolysis of 5,10-methenyltetrahydrofolate to 10-formyltetrahydrofolate. This Listeria monocytogenes serotype 4a (strain HCC23) protein is Bifunctional protein FolD.